Here is a 1252-residue protein sequence, read N- to C-terminus: Plasma membrane calcium-transporting ATPase mca-1 (1252 aa).

Residues 1-121 lie on the Cytoplasmic side of the membrane; that stretch reads MQKSQNVTAV…VRLVLDACKD (121 aa). Residues 122–142 traverse the membrane as a helical segment; that stretch reads PTLVILVLSGFINLALSFYEP. Residues 143-180 are Extracellular-facing; sequence TSAAEDATQHLVNATTAAILANGTFMSTTEAPSEGHGT. N-linked (GlcNAc...) asparagine glycans are attached at residues Asn-155 and Asn-164. Residues 181–201 form a helical membrane-spanning segment; sequence AWIEGVAILLCVIVVVLVTAV. At 202–376 the chain is on the cytoplasmic side; the sequence is NDYSKERQFR…KSVLQAKLSK (175 aa). The segment at 330–361 is disordered; the sequence is DDSTSTSSSSSSSSSSSGSSSNGSSDSSKSGD. Low complexity predominate over residues 333 to 357; it reads TSTSSSSSSSSSSSGSSSNGSSDSS. The chain crosses the membrane as a helical span at residues 377-397; sequence LALQIIYCGTTIAIIALIVLV. Over 398-422 the chain is Extracellular; sequence TRFCLDHYVFEKNEFSLVDIQMFVK. A helical membrane pass occupies residues 423 to 443; it reads FFIIAVTILVISIPEGLPLAI. 3 residues coordinate Ca(2+): Val-432, Ile-435, and Glu-437. Topologically, residues 444 to 879 are cytoplasmic; sequence ALALTYSVRK…GRNVYDSISK (436 aa). Asp-479 (4-aspartylphosphate intermediate) is an active-site residue. Positions 479 and 481 each coordinate Mg(2+). ATP-binding residues include Thr-481, Glu-553, Lys-612, Thr-733, Gly-734, Asp-735, Arg-792, and Lys-798. Asp-822 contacts Mg(2+). Asn-825 contributes to the ATP binding site. The chain crosses the membrane as a helical span at residues 880–900; the sequence is FLQFQLTVNVVAVITAFVGAV. Asn-888 lines the Ca(2+) pocket. Residues 901 to 908 lie on the Extracellular side of the membrane; that stretch reads TVSDSPLK. The helical transmembrane segment at 909-929 threads the bilayer; the sequence is AVHMLWINLIMDTLASLALAT. Positions 916 and 920 each coordinate Ca(2+). Over 930–960 the chain is Cytoplasmic; sequence EQPTDELLERKPYGRKKSLISRTMVKNILCH. The chain crosses the membrane as a helical span at residues 961 to 981; the sequence is ALYQLIIIFVIFFYGDTIFGI. Topologically, residues 982–989 are extracellular; it reads KTGLYAPL. A helical membrane pass occupies residues 990-1010; that stretch reads FAPPSQHFTLVFNAFVMMTVF. The Cytoplasmic segment spans residues 1011–1035; it reads NEINARKVHGERNVFKGLASNRVFC. Residues 1036-1056 form a helical membrane-spanning segment; it reads VIWVTTFIAQIIIVQFGGAWF. Residues 1057–1065 are Extracellular-facing; sequence STAPLTLQQ. Residues 1066–1086 traverse the membrane as a helical segment; it reads WIVCLVLGFSTLIWGQIVATI. Residues 1087-1252 are Cytoplasmic-facing; the sequence is PSKKLPKAWK…NVDMEDIELN (166 aa). The segment at 1124–1142 is calmodulin-binding subdomain A; the sequence is LRRSGKSLWVRGMFIIGNH. The tract at residues 1143–1152 is calmodulin-binding subdomain B; that stretch reads LRVLRAFGME. The segment at 1181 to 1252 is disordered; that stretch reads YRHQKHQEKK…NVDMEDIELN (72 aa).

The protein belongs to the cation transport ATPase (P-type) (TC 3.A.3) family. Type IIB subfamily. As to quaternary structure, interacts with calmodulin.

It localises to the cell membrane. It catalyses the reaction Ca(2+)(in) + ATP + H2O = Ca(2+)(out) + ADP + phosphate + H(+). Functionally, catalyzes the hydrolysis of ATP coupled with the transport of calcium across a membrane. This chain is Plasma membrane calcium-transporting ATPase mca-1, found in Caenorhabditis elegans.